The primary structure comprises 300 residues: Cation-efflux pump FieF (300 aa).

4 helical membrane-spanning segments follow: residues 12 to 32 (AALS…FAWW), 40 to 60 (LAAL…LFVV), 82 to 102 (AALA…LTGF), and 114 to 134 (PGLG…LVTF). Zn(2+) contacts are provided by Asp-45 and Asp-49. Zn(2+) is bound by residues His-153 and Asp-157. Residues 164–184 (ILIALALSWYGFHRADALFAL) traverse the membrane as a helical segment.

Belongs to the cation diffusion facilitator (CDF) transporter (TC 2.A.4) family. FieF subfamily. In terms of assembly, homodimer.

The protein localises to the cell inner membrane. The catalysed reaction is Zn(2+)(in) + H(+)(out) = Zn(2+)(out) + H(+)(in). The enzyme catalyses Cd(2+)(in) + H(+)(out) = Cd(2+)(out) + H(+)(in). It catalyses the reaction Fe(2+)(in) + H(+)(out) = Fe(2+)(out) + H(+)(in). Divalent metal cation transporter which exports Zn(2+), Cd(2+) and possibly Fe(2+). May be involved in zinc and iron detoxification by efflux. This Yersinia enterocolitica serotype O:8 / biotype 1B (strain NCTC 13174 / 8081) protein is Cation-efflux pump FieF.